Here is a 459-residue protein sequence, read N- to C-terminus: MDREDLWHSALGAVWDPTCWLKGQQERYLGQVTVAQKEIYNEKSVCGGNTTENSSTEGSMLNTPQSIPVTPCNWNSYRKDSKQNSELMKTSRMFVQKKVYGCDECGKTFRQSSSLLKHQRIHTGEKPYTCNVCDKHFIERSSLTVHQRTHTGEKPYKCHECGKAFSQSMNLTVHQRTHTGEKPYQCKECGKAFRKNSSLIQHERIHTGEKPYKCHDCGKAFTQSMNLTVHQRTHTGEKPYECNQCGKAFSQSMHLIVHQRSHTGEKPYECSECGKAFSKSSTLTLHQRNHTGEKPYKCNKCGKSFSQSTYLIEHQRLHSGVKPFECNQCGKAFSKNSSLTQHRRIHTGEKPYECMICGKHFTGRSSLTVHQVIHTGEKPYECTECGKAFSQSAYLIEHQRIHTGEKPYECDQCGKAFIKNSSLIVHQRIHTGEKPYQCNECGKSFSRSTNLTRHQRTHT.

C2H2-type zinc fingers lie at residues 100-122 (YGCD…QRIH), 128-150 (YTCN…QRTH), 156-178 (YKCH…QRTH), 184-206 (YQCK…ERIH), 212-234 (YKCH…QRTH), 240-262 (YECN…QRSH), 268-290 (YECS…QRNH), 296-318 (YKCN…QRLH), 324-346 (FECN…RRIH), 352-374 (YECM…QVIH), 380-402 (YECT…QRIH), 408-430 (YECD…QRIH), and 436-458 (YQCN…QRTH).

The protein belongs to the krueppel C2H2-type zinc-finger protein family.

Its subcellular location is the nucleus. Probable transcription factor involved in neuronal differentiation and/or phenotypic maintenance. The polypeptide is Zinc finger protein ZFP2 (Zfp2) (Mus musculus (Mouse)).